The sequence spans 156 residues: ATP synthase subunit b (156 aa).

Residues 7 to 29 (LIGQLIAFALFTWFCVKFVWPPI) traverse the membrane as a helical segment.

Belongs to the ATPase B chain family. As to quaternary structure, F-type ATPases have 2 components, F(1) - the catalytic core - and F(0) - the membrane proton channel. F(1) has five subunits: alpha(3), beta(3), gamma(1), delta(1), epsilon(1). F(0) has three main subunits: a(1), b(2) and c(10-14). The alpha and beta chains form an alternating ring which encloses part of the gamma chain. F(1) is attached to F(0) by a central stalk formed by the gamma and epsilon chains, while a peripheral stalk is formed by the delta and b chains.

The protein localises to the cell inner membrane. Functionally, f(1)F(0) ATP synthase produces ATP from ADP in the presence of a proton or sodium gradient. F-type ATPases consist of two structural domains, F(1) containing the extramembraneous catalytic core and F(0) containing the membrane proton channel, linked together by a central stalk and a peripheral stalk. During catalysis, ATP synthesis in the catalytic domain of F(1) is coupled via a rotary mechanism of the central stalk subunits to proton translocation. Component of the F(0) channel, it forms part of the peripheral stalk, linking F(1) to F(0). This chain is ATP synthase subunit b, found in Actinobacillus succinogenes (strain ATCC 55618 / DSM 22257 / CCUG 43843 / 130Z).